Consider the following 245-residue polypeptide: Brasilane terpene glycosides biosynthesis cluster protein D (245 aa).

2 consecutive C3H1-type zinc fingers follow at residues 121-152 (KELKIICPWWLTDGYSCREHDQGKCPFYHDNV) and 161-185 (ICHFWADGGRCTKSQKDCRFAHYPA). Residues 186-245 (PHRVTAPMPSKKKSKKLRSSVADDASHPDLGKARRHDPRDDEQNDEVWRNQGRARPGQEW) are disordered. Over residues 209-226 (DASHPDLGKARRHDPRDD) the composition is skewed to basic and acidic residues.

Its function is as follows. Part of the gene cluster that mediates the biosynthesis of the brasilane terpene glycosides brasilane D and E. The biosynthesis starts with the activity of the terpene cyclase braA that converts farnesyl pyrophosphate into the sesquiterpene alcohol trichobrasilenol. Subsequently, trichobrasilenol is glycosylated by the O-glycosyltransferase braB putatively using UDP-GlcNAc as sugar donor to yield brasilane A. The latter then undergoes two rounds of oxidation performed by the cytochrome P450 monooxygenase braC. In the first round braC hydroxylates C-12 forming brasilane D, which serves as substrate in the second round to establish the epoxide at the bond between C-5 and C-10 and oxidize the alcohol at C-12 to an aldehyde leading to the final product brasilane E. The polypeptide is Brasilane terpene glycosides biosynthesis cluster protein D (Annulohypoxylon truncatum (Hypoxylon truncatum)).